We begin with the raw amino-acid sequence, 178 residues long: Putative pre-16S rRNA nuclease (178 aa).

2 stretches are compositionally biased toward basic and acidic residues: residues Met-1–Arg-18 and Pro-50–Pro-60. Disordered regions lie at residues Met-1–Gly-23 and Ser-36–Pro-60.

It belongs to the YqgF nuclease family.

Its subcellular location is the cytoplasm. Its function is as follows. Could be a nuclease involved in processing of the 5'-end of pre-16S rRNA. The chain is Putative pre-16S rRNA nuclease from Rhodococcus opacus (strain B4).